Consider the following 615-residue polypeptide: Cysteine-rich receptor-like protein kinase 1 (615 aa).

The N-terminal stretch at 1 to 28 (MQICASIAQFLAWVSFLVLLATVGSSSS) is a signal peptide. Gnk2-homologous domains follow at residues 29-131 (SESL…DRDF) and 137-237 (DPTF…THKF). Residues 29-266 (SESLLNCQPL…SFFPHLSDRD (238 aa)) are Extracellular-facing. N-linked (GlcNAc...) asparagine glycosylation is found at N100 and N165. A helical membrane pass occupies residues 267–287 (VTRLAIAAISLSILTSLGAFI). The Cytoplasmic segment spans residues 288–615 (SYRRVSRKRK…VLMPDEETRV (328 aa)). One can recognise a Protein kinase domain in the interval 318–602 (FHDSMKLGQG…FEYPKQPPFL (285 aa)). Residues 324-332 (LGQGGAGSV) and K346 contribute to the ATP site. D443 functions as the Proton acceptor in the catalytic mechanism.

The protein belongs to the protein kinase superfamily. Ser/Thr protein kinase family. CRK subfamily. Expressed in the whole plant at low levels.

Its subcellular location is the membrane. The enzyme catalyses L-seryl-[protein] + ATP = O-phospho-L-seryl-[protein] + ADP + H(+). The catalysed reaction is L-threonyl-[protein] + ATP = O-phospho-L-threonyl-[protein] + ADP + H(+). The sequence is that of Cysteine-rich receptor-like protein kinase 1 from Arabidopsis thaliana (Mouse-ear cress).